The following is a 122-amino-acid chain: Succinate dehydrogenase assembly factor 2, mitochondrial (122 aa).

Belongs to the SDHAF2 family. In terms of assembly, interacts with the flavoprotein subunit within the SDH catalytic dimer.

Its subcellular location is the mitochondrion matrix. Plays an essential role in the assembly of succinate dehydrogenase (SDH), an enzyme complex (also referred to as respiratory complex II) that is a component of both the tricarboxylic acid (TCA) cycle and the mitochondrial electron transport chain, and which couples the oxidation of succinate to fumarate with the reduction of ubiquinone (coenzyme Q) to ubiquinol. Required for flavinylation (covalent attachment of FAD) of the flavoprotein subunit of the SDH catalytic dimer. This Caenorhabditis briggsae protein is Succinate dehydrogenase assembly factor 2, mitochondrial.